Reading from the N-terminus, the 337-residue chain is DNA-directed RNA polymerase subunit alpha (337 aa).

The segment at 1–233 (MVREEVVGST…DLFIPFLHAE (233 aa)) is alpha N-terminal domain (alpha-NTD). The segment at 265–337 (KEIALKCIFI…FAIDLPKNKF (73 aa)) is alpha C-terminal domain (alpha-CTD).

Belongs to the RNA polymerase alpha chain family. As to quaternary structure, in plastids the minimal PEP RNA polymerase catalytic core is composed of four subunits: alpha, beta, beta', and beta''. When a (nuclear-encoded) sigma factor is associated with the core the holoenzyme is formed, which can initiate transcription.

The protein localises to the plastid. It localises to the chloroplast. The enzyme catalyses RNA(n) + a ribonucleoside 5'-triphosphate = RNA(n+1) + diphosphate. Its function is as follows. DNA-dependent RNA polymerase catalyzes the transcription of DNA into RNA using the four ribonucleoside triphosphates as substrates. The chain is DNA-directed RNA polymerase subunit alpha from Acorus calamus (Sweet flag).